The following is a 161-amino-acid chain: Ureidoglycolate lyase (161 aa).

It belongs to the ureidoglycolate lyase family. In terms of assembly, homodimer. The cofactor is Ni(2+).

The enzyme catalyses (S)-ureidoglycolate = urea + glyoxylate. It functions in the pathway nitrogen metabolism; (S)-allantoin degradation. Functionally, catalyzes the catabolism of the allantoin degradation intermediate (S)-ureidoglycolate, generating urea and glyoxylate. Involved in the utilization of allantoin as nitrogen source. This is Ureidoglycolate lyase from Rhodobacter capsulatus (strain ATCC BAA-309 / NBRC 16581 / SB1003).